Reading from the N-terminus, the 463-residue chain is L-seryl-tRNA(Sec) selenium transferase (463 aa).

Lys295 bears the N6-(pyridoxal phosphate)lysine mark.

It belongs to the SelA family. Homodecamer; pentamer of dimers. Binds only one seryl-tRNA(Sec) per dimer. The cofactor is pyridoxal 5'-phosphate.

It is found in the cytoplasm. The catalysed reaction is L-seryl-tRNA(Sec) + selenophosphate + H(+) = L-selenocysteinyl-tRNA(Sec) + phosphate. Its pathway is aminoacyl-tRNA biosynthesis; selenocysteinyl-tRNA(Sec) biosynthesis; selenocysteinyl-tRNA(Sec) from L-seryl-tRNA(Sec) (bacterial route): step 1/1. Functionally, converts seryl-tRNA(Sec) to selenocysteinyl-tRNA(Sec) required for selenoprotein biosynthesis. The sequence is that of L-seryl-tRNA(Sec) selenium transferase from Salmonella arizonae (strain ATCC BAA-731 / CDC346-86 / RSK2980).